The following is a 364-amino-acid chain: Growth hormone secretagogue receptor type 1 (364 aa).

The Extracellular segment spans residues 1-40; it reads MWNATPSEEPEPNVTLDLDWDASPGNDSLSDELLPLFPAP. N-linked (GlcNAc...) asparagine glycosylation is found at Asn13 and Asn26. The helical transmembrane segment at 41–66 threads the bilayer; sequence LLAGVTATCVALFVVGISGNLLTMLV. The Cytoplasmic segment spans residues 67-72; sequence VSRFRE. The chain crosses the membrane as a helical span at residues 73-96; the sequence is LRTTTNLYLSSMAFSDLLIFLCMP. The Extracellular segment spans residues 97-117; it reads LDLVRLWQYRPWNFGDLLCKL. Cys115 and Cys197 are disulfide-bonded. Residues 118–139 traverse the membrane as a helical segment; the sequence is FQFVSESCTYATVLTITALSVE. Residues 140–162 lie on the Cytoplasmic side of the membrane; that stretch reads RYFAICFPLRAKVVVTKGRVKLV. Residues 163–183 traverse the membrane as a helical segment; sequence ILVIWAVAFCSAGPIFVLVGV. At 184 to 211 the chain is on the extracellular side; that stretch reads EHENGTDPRDTNECRATEFAVRSGLLTV. Asn187 carries N-linked (GlcNAc...) asparagine glycosylation. A helical transmembrane segment spans residues 212 to 235; the sequence is MVWVSSVFFFLPVFCLTVLYSLIG. Over 236–263 the chain is Cytoplasmic; that stretch reads RKLWRRRGDAAVGSSLRDQNHKQTVKML. The helical transmembrane segment at 264 to 285 threads the bilayer; sequence AVVVFAFILCWLPFHVGRYLFS. The Extracellular segment spans residues 286-302; sequence KSFEPGSLEIAQISQYC. Residues 303–326 form a helical membrane-spanning segment; sequence NLVSFVLFYLSAAINPILYNIMSK. Residues 327 to 364 lie on the Cytoplasmic side of the membrane; it reads KYRVAVFKLLGFESFSQRKLSTLKDESSRAWTKSSINT.

Belongs to the G-protein coupled receptor 1 family.

It is found in the cell membrane. Its function is as follows. Receptor for ghrelin, coupled to G-alpha-11 proteins. Stimulates growth hormone secretion. Also binds other growth hormone releasing peptides (GHRP) (e.g. Met-enkephalin and GHRP-6) as well as non-peptide, low molecular weight secretagogues (e.g. L-692,429, MK-0677, adenosine). The polypeptide is Growth hormone secretagogue receptor type 1 (Ghsr) (Mus musculus (Mouse)).